The chain runs to 908 residues: Metabotropic glutamate receptor 8 (908 aa).

The signal sequence occupies residues 1 to 33 (MVCEGKRSTSCPCFFLLTAKFYWILTMMQRTHS). The Extracellular segment spans residues 34–583 (QEYAHSIRLD…IIKLEWHSPW (550 aa)). Cysteines 64 and 106 form a disulfide. A glycan (N-linked (GlcNAc...) asparagine) is linked at asparagine 95. Residues serine 156, 177-179 (AST), and tyrosine 227 each bind L-glutamate. Intrachain disulfides connect cysteine 246-cysteine 534, cysteine 369-cysteine 384, cysteine 424-cysteine 431, cysteine 516-cysteine 535, cysteine 520-cysteine 538, cysteine 541-cysteine 553, and cysteine 556-cysteine 569. A glycan (N-linked (GlcNAc...) asparagine) is linked at asparagine 298. Residue aspartate 309 coordinates L-glutamate. Residue lysine 401 participates in L-glutamate binding. Residues asparagine 452 and asparagine 480 are each glycosylated (N-linked (GlcNAc...) asparagine). A glycan (N-linked (GlcNAc...) asparagine) is linked at asparagine 565. A helical membrane pass occupies residues 584–608 (AVVPVFIAILGIIATTFVIVTFVRY). Over 609–620 (NDTPIVRASGRE) the chain is Cytoplasmic. A helical transmembrane segment spans residues 621 to 641 (LSYVLLTGIFLCYSITFLMIA). Over 642–647 (APDTII) the chain is Extracellular. A helical membrane pass occupies residues 648-668 (CSFRRIFLGLGMCFSYAALLT). At 669-695 (KTNRIHRIFEQGKKSVTAPKFISPASQ) the chain is on the cytoplasmic side. Residues 696 to 716 (LVITFSLISVQLLGVFVWFVV) traverse the membrane as a helical segment. The Extracellular segment spans residues 717–746 (DPPHTIIDYGEQRTLDPENARGVLKCDISD). A helical transmembrane segment spans residues 747–768 (LSLICSLGYSILLMVTCTVYAI). Over 769-781 (KTRGVPETFNEAK) the chain is Cytoplasmic. Residues 782 to 803 (PIGFTMYTTCIIWLAFIPIFFG) form a helical membrane-spanning segment. Residues 804 to 818 (TAQSAEKMYIQTTTL) lie on the Extracellular side of the membrane. Residues 819–843 (TVSMSLSASVSLGMLYMPKVYIIIF) traverse the membrane as a helical segment. Over 844–908 (HPEQNVQKRK…TYISYSNHSI (65 aa)) the chain is Cytoplasmic. Residue lysine 882 forms a Glycyl lysine isopeptide (Lys-Gly) (interchain with G-Cter in SUMO1) linkage.

The protein belongs to the G-protein coupled receptor 3 family. Interacts with PICK1. As to expression, strongly expressed in olfactory bulb, accessory olfactory bulb, and mammillary body. Weaker expression in the retina, and in scattered cells in the cortex and hindbrain.

It is found in the cell membrane. Its function is as follows. G-protein coupled receptor for glutamate. Ligand binding causes a conformation change that triggers signaling via guanine nucleotide-binding proteins (G proteins) and modulates the activity of down-stream effectors. Signaling inhibits adenylate cyclase activity. The chain is Metabotropic glutamate receptor 8 (Grm8) from Mus musculus (Mouse).